The sequence spans 131 residues: Large ribosomal subunit protein bL19 (131 aa).

Residues 110–131 (KSARIAERTDDRAKKAKATAAE) are disordered. A compositionally biased stretch (basic and acidic residues) spans 113-122 (RIAERTDDRA).

It belongs to the bacterial ribosomal protein bL19 family.

Its function is as follows. This protein is located at the 30S-50S ribosomal subunit interface and may play a role in the structure and function of the aminoacyl-tRNA binding site. The polypeptide is Large ribosomal subunit protein bL19 (Azorhizobium caulinodans (strain ATCC 43989 / DSM 5975 / JCM 20966 / LMG 6465 / NBRC 14845 / NCIMB 13405 / ORS 571)).